Here is a 101-residue protein sequence, read N- to C-terminus: Apolipoprotein C-II (101 aa).

The N-terminal stretch at 1–22 (MGTRCLLVLLLVLLVLKCEVQG) is a signal peptide. Positions 23–28 (DDMARQ) are cleaved as a propeptide — removed in mature form. A lipid binding region spans residues 66–74 (AMDEKIRDM). The interval 78-101 (STAAVRIYTGILTDQILSMLTGDP) is lipoprotein lipase cofactor.

This sequence belongs to the apolipoprotein C2 family. Post-translationally, proapolipoprotein C-II is synthesized as a sialic acid containing glycoprotein which is subsequently desialylated prior to its proteolytic processing. Proapolipoprotein C-II, the major form found in plasma undergoes proteolytic cleavage of its N-terminal hexapeptide to generate the mature form apolipoprotein C-II, which occurs as the minor form in plasma.

Its subcellular location is the secreted. Its function is as follows. Component of chylomicrons, very low-density lipoproteins (VLDL), low-density lipoproteins (LDL), and high-density lipoproteins (HDL) in plasma. Plays an important role in lipoprotein metabolism as an activator of lipoprotein lipase, the enzyme which hydrolyzes the triacylglycerols on chylomicrons and VLDL. The sequence is that of Apolipoprotein C-II (APOC2) from Panthera tigris altaica (Siberian tiger).